Here is a 713-residue protein sequence, read N- to C-terminus: Methionine--tRNA ligase (713 aa).

The 'HIGH' region signature appears at 31–41 (PYANGSIHLGH). Zn(2+) is bound by residues cysteine 162, cysteine 165, cysteine 175, and cysteine 178. A 'KMSKS' region motif is present at residues 348–352 (KMSKS). An ATP-binding site is contributed by lysine 351. One can recognise a tRNA-binding domain in the interval 609–713 (DFAKIDLRIV…DGAKAGMRVK (105 aa)).

The protein belongs to the class-I aminoacyl-tRNA synthetase family. MetG type 1 subfamily. As to quaternary structure, homodimer. Zn(2+) serves as cofactor.

Its subcellular location is the cytoplasm. The catalysed reaction is tRNA(Met) + L-methionine + ATP = L-methionyl-tRNA(Met) + AMP + diphosphate. Is required not only for elongation of protein synthesis but also for the initiation of all mRNA translation through initiator tRNA(fMet) aminoacylation. This is Methionine--tRNA ligase from Colwellia psychrerythraea (strain 34H / ATCC BAA-681) (Vibrio psychroerythus).